The chain runs to 395 residues: Univin (395 aa).

The signal sequence occupies residues 1 to 19 (MDVSKVLILTLIWLLTADS). The propeptide occupies 20–272 (APPDYVTLTR…CSKRNRRNKR (253 aa)). Asn-50 is a glycosylation site (N-linked (GlcNAc...) asparagine). The disordered stretch occupies residues 69 to 97 (EGAAASRGGETEIGKEEEEDGRPCSETKL). Asn-116 and Asn-336 each carry an N-linked (GlcNAc...) asparagine glycan. 3 cysteine pairs are disulfide-bonded: Cys-294/Cys-360, Cys-323/Cys-392, and Cys-327/Cys-394.

This sequence belongs to the TGF-beta family. In terms of assembly, homodimer; disulfide-linked.

It localises to the secreted. Could have a critical role in early developmental decisions in the sea urchin embryo. This chain is Univin, found in Strongylocentrotus purpuratus (Purple sea urchin).